Here is a 154-residue protein sequence, read N- to C-terminus: Transcriptional repressor NrdR (154 aa).

A zinc finger spans residues 3 to 34 (CPFCGANDTKVIDSRLVAEGEQVRRRRECLAC). The ATP-cone domain occupies 49 to 139 (PRLIKTDGSR…VYRRFQDLNE (91 aa)).

Belongs to the NrdR family. Zn(2+) serves as cofactor.

In terms of biological role, negatively regulates transcription of bacterial ribonucleotide reductase nrd genes and operons by binding to NrdR-boxes. This Pseudomonas fluorescens (strain Pf0-1) protein is Transcriptional repressor NrdR.